A 591-amino-acid chain; its full sequence is F420 non-reducing hydrogenase II large subunit (591 aa).

Glu-42 contributes to the Mg(2+) binding site. Cys-61, Cys-64, Cys-569, and Cys-572 together coordinate Ni(2+). Fe cation is bound at residue Cys-64. Position 572 (Cys-572) interacts with Fe cation. His-575 is a Mg(2+) binding site.

It belongs to the [NiFe]/[NiFeSe] hydrogenase large subunit family. Composed of a large subunit (VhtA), a small subunit (VhtG) and a cytochrome subunit (VhtC). It depends on Ni(2+) as a cofactor. Fe cation serves as cofactor.

Its subcellular location is the cell membrane. The catalysed reaction is methanophenazine + H2 = dihydromethanophenazine. In terms of biological role, part of the F420 non-reducing hydrogenase II complex that catalyzes the reduction of methanophenazine to dihydromethanophenazine. The chain is F420 non-reducing hydrogenase II large subunit from Methanosarcina mazei (strain ATCC BAA-159 / DSM 3647 / Goe1 / Go1 / JCM 11833 / OCM 88) (Methanosarcina frisia).